Here is a 1175-residue protein sequence, read N- to C-terminus: Chromosome partition protein Smc (1175 aa).

An ATP-binding site is contributed by 32–39 (PNGCGKSN). Residues 170–504 (VSKYKERRRE…ALKALQEKVK (335 aa)) adopt a coiled-coil conformation. Residues 524–625 (LWSRIAIEPG…YTAPTLEEAL (102 aa)) enclose the SMC hinge domain. 2 coiled-coil regions span residues 684–918 (DESR…FQLK) and 944–1022 (SQSI…ELLS). Residues 807–849 (RQAQEATFSRRSLEARRGELSRTIETASQQARSLADEQQRAQD) are disordered. Residues 817–828 (RSLEARRGELSR) show a composition bias toward basic and acidic residues. Over residues 829–838 (TIETASQQAR) the composition is skewed to polar residues. The span at 840–849 (LADEQQRAQD) shows a compositional bias: basic and acidic residues.

The protein belongs to the SMC family. Homodimer.

It is found in the cytoplasm. Its function is as follows. Required for chromosome condensation and partitioning. The protein is Chromosome partition protein Smc of Delftia acidovorans (strain DSM 14801 / SPH-1).